We begin with the raw amino-acid sequence, 375 residues long: Succinyl-diaminopimelate desuccinylase (375 aa).

Histidine 66 is a Zn(2+) binding site. Residue aspartate 68 is part of the active site. Aspartate 99 lines the Zn(2+) pocket. The active-site Proton acceptor is glutamate 133. Zn(2+)-binding residues include glutamate 134, glutamate 162, and histidine 348.

It belongs to the peptidase M20A family. DapE subfamily. Homodimer. Zn(2+) serves as cofactor. The cofactor is Co(2+).

It catalyses the reaction N-succinyl-(2S,6S)-2,6-diaminopimelate + H2O = (2S,6S)-2,6-diaminopimelate + succinate. Its pathway is amino-acid biosynthesis; L-lysine biosynthesis via DAP pathway; LL-2,6-diaminopimelate from (S)-tetrahydrodipicolinate (succinylase route): step 3/3. In terms of biological role, catalyzes the hydrolysis of N-succinyl-L,L-diaminopimelic acid (SDAP), forming succinate and LL-2,6-diaminopimelate (DAP), an intermediate involved in the bacterial biosynthesis of lysine and meso-diaminopimelic acid, an essential component of bacterial cell walls. This chain is Succinyl-diaminopimelate desuccinylase, found in Escherichia coli O6:K15:H31 (strain 536 / UPEC).